Reading from the N-terminus, the 150-residue chain is FCS-Like Zinc finger 15 (150 aa).

The segment covering 12-28 (NNNNNNNNNNNNNNNKN) has biased composition (low complexity). A disordered region spans residues 12-31 (NNNNNNNNNNNNNNNKNPLS). An FLZ-type zinc finger spans residues 67-111 (GFLEHCFLCRRKLLPAKDIYMYKGDRAFCSVECRSKQMIMDEEES). The disordered stretch occupies residues 129–150 (SPATAPSRYRRDPRNQAGGFAY).

The protein belongs to the FLZ family. As to quaternary structure, interacts with KIN10 and KIN11 via its FLZ-type zinc finger domain. Interacts with KINB1 and KINB3 via its N-terminal part. Forms homodimer and heterodimer with FLZ1, FLZ2 and FLZ7 in vitro.

The protein resides in the cytoplasm. It is found in the P-body. In terms of biological role, may act as an adapter to facilitate the interaction of SnRK1 complex with effector proteins, conferring tissue- and stimulus-type specific differences in the SnRK1 regulation pathway. The sequence is that of FCS-Like Zinc finger 15 from Arabidopsis thaliana (Mouse-ear cress).